We begin with the raw amino-acid sequence, 180 residues long: ADP-ribosylation factor 5 (180 aa).

Glycine 2 carries the N-myristoyl glycine lipid modification. GTP-binding positions include 24 to 31, 67 to 71, and 126 to 129; these read GLDAAGKT, DVGGQ, and NKQD.

It belongs to the small GTPase superfamily. Arf family. As to quaternary structure, interacts (when activated) with GGA1, GGA2 and GGA3; the interaction is required for proper subcellular location of GGA1, GGA2 and GGA3. Binds ASAP2. Interacts with NCS1/FREQ at the Golgi complex. Interacts with RAB11FIP3 and RAB11FIP4.

It is found in the golgi apparatus. The protein resides in the cytoplasm. Its subcellular location is the perinuclear region. The protein localises to the membrane. It localises to the trans-Golgi network membrane. In terms of biological role, GTP-binding protein involved in protein trafficking; may modulate vesicle budding and uncoating within the Golgi apparatus. Functionally, (Microbial infection) Functions as an allosteric activator of the cholera toxin catalytic subunit, an ADP-ribosyltransferase. The protein is ADP-ribosylation factor 5 (ARF5) of Homo sapiens (Human).